We begin with the raw amino-acid sequence, 166 residues long: Small ribosomal subunit protein uS5 (166 aa).

The S5 DRBM domain maps to 12–75 (YIEKLVQVNR…EAARRNMIQV (64 aa)).

Belongs to the universal ribosomal protein uS5 family. In terms of assembly, part of the 30S ribosomal subunit. Contacts proteins S4 and S8.

Its function is as follows. With S4 and S12 plays an important role in translational accuracy. Located at the back of the 30S subunit body where it stabilizes the conformation of the head with respect to the body. In Pseudomonas savastanoi pv. phaseolicola (strain 1448A / Race 6) (Pseudomonas syringae pv. phaseolicola (strain 1448A / Race 6)), this protein is Small ribosomal subunit protein uS5.